The sequence spans 153 residues: SsrA-binding protein (153 aa).

Residues 132 to 153 are disordered; that stretch reads REKDWLRERERVMKHDTRRRSD.

It belongs to the SmpB family.

It is found in the cytoplasm. Required for rescue of stalled ribosomes mediated by trans-translation. Binds to transfer-messenger RNA (tmRNA), required for stable association of tmRNA with ribosomes. tmRNA and SmpB together mimic tRNA shape, replacing the anticodon stem-loop with SmpB. tmRNA is encoded by the ssrA gene; the 2 termini fold to resemble tRNA(Ala) and it encodes a 'tag peptide', a short internal open reading frame. During trans-translation Ala-aminoacylated tmRNA acts like a tRNA, entering the A-site of stalled ribosomes, displacing the stalled mRNA. The ribosome then switches to translate the ORF on the tmRNA; the nascent peptide is terminated with the 'tag peptide' encoded by the tmRNA and targeted for degradation. The ribosome is freed to recommence translation, which seems to be the essential function of trans-translation. This chain is SsrA-binding protein, found in Bordetella avium (strain 197N).